The chain runs to 180 residues: Small ribosomal subunit protein uS5 (180 aa).

Positions Met1 to Asp20 are disordered. The region spanning Leu22–Val85 is the S5 DRBM domain.

Belongs to the universal ribosomal protein uS5 family. As to quaternary structure, part of the 30S ribosomal subunit. Contacts proteins S4 and S8.

With S4 and S12 plays an important role in translational accuracy. Functionally, located at the back of the 30S subunit body where it stabilizes the conformation of the head with respect to the body. The sequence is that of Small ribosomal subunit protein uS5 from Nitrosospira multiformis (strain ATCC 25196 / NCIMB 11849 / C 71).